A 2225-amino-acid polypeptide reads, in one-letter code: Multifunctional protein CAD (2225 aa).

N-acetylalanine is present on Ala-2. Residues 2-365 form a GATase (Glutamine amidotransferase) region; it reads AALVLEDGSV…TVKEATAGNP (364 aa). Ser-44, Gly-222, and Gly-224 together coordinate L-glutamine. The region spanning 177 to 363 is the Glutamine amidotransferase type-1 domain; the sequence is RILALDCGLK…LETVKEATAG (187 aa). The Nucleophile; for GATase activity role is filled by Cys-252. Leu-253, Gln-256, Asn-294, Gly-296, and Phe-297 together coordinate L-glutamine. Active-site for GATase activity residues include His-336 and Glu-338. Residues 366–394 form a linker region; it reads GGQTVRERLTERLCPPGIPTPGSGLPPPR. The tract at residues 395–933 is CPSase A; the sequence is KVLILGSGGL…TTHDLTFRTP (539 aa). Residues 395-1455 form a CPSase (Carbamoyl phosphate synthase) region; that stretch reads KVLILGSGGL…APPLKVHVDC (1061 aa). At Thr-456 the chain carries Phosphothreonine; by MAPK1. ATP is bound by residues Arg-515, Arg-555, Gly-561, Gly-562, Lys-592, Glu-599, Gly-625, Ile-626, His-627, Gln-668, and Glu-682. One can recognise an ATP-grasp 1 domain in the interval 519-711; it reads AARMAEIGEH…LAYVAAKLAL (193 aa). Residues Gln-668, Glu-682, and Asn-684 each coordinate Mg(2+). Gln-668, Glu-682, and Asn-684 together coordinate Mn(2+). At Lys-747 the chain carries N6-acetyllysine. Residues 934-1455 are CPSase B; that stretch reads HVLVLGSGVY…APPLKVHVDC (522 aa). Position 1038 is a phosphoserine (Ser-1038). The region spanning 1052–1243 is the ATP-grasp 2 domain; it reads SRLLDTIGIS…LVALATRVIM (192 aa). 10 residues coordinate ATP: Arg-1088, Lys-1127, Ile-1129, Glu-1134, Gly-1159, Val-1160, His-1161, Ser-1162, Gln-1202, and Glu-1214. Gln-1202, Glu-1214, and Asn-1216 together coordinate Mg(2+). Mn(2+) is bound by residues Gln-1202, Glu-1214, and Asn-1216. In terms of domain architecture, MGS-like spans 1308-1462; sequence FKIPKKNILL…VDCMTSQKLV (155 aa). A Phosphoserine; by PKA modification is found at Ser-1406. Residue Lys-1411 is modified to N6-acetyllysine. Residues 1456–1788 form a DHOase (dihydroorotase) region; it reads MTSQKLVRLP…VKGTVRRVVL (333 aa). Residues His-1471 and His-1473 each coordinate Zn(2+). Arg-1475 and Asn-1505 together coordinate (S)-dihydroorotate. Residues Lys-1556, His-1590, Cys-1613, His-1614, and Glu-1637 each contribute to the Zn(2+) site. Lys-1556 bears the N6-carboxylysine mark. Residue Arg-1661 coordinates (S)-dihydroorotate. A Zn(2+)-binding site is contributed by Asp-1686. Asp-1686 (for DHOase activity) is an active-site residue. His-1690 and Pro-1702 together coordinate (S)-dihydroorotate. Positions 1789–1917 are linker; sequence RGEVAYIDGQ…GLLHPQTSPL (129 aa). A disordered region spans residues 1811–1899; the sequence is KWPQGAVPQL…YPPPPVPRQA (89 aa). Positions 1825 to 1834 are enriched in polar residues; it reads PATSEMTTTP. Ser-1859 is subject to Phosphoserine; by RPS6KB1 and PKA. Over residues 1866–1878 the composition is skewed to basic and acidic residues; that stretch reads EEPKEKSSRKVAE. Position 1873 is a phosphoserine; by PKC; in vitro (Ser-1873). The residue at position 1884 (Thr-1884) is a Phosphothreonine. Residues Ser-1900 and Ser-1938 each carry the phosphoserine modification. Residues 1918–2225 form an ATCase (Aspartate transcarbamylase) region; that stretch reads LHSLVGQHIL…ALLATVLGRF (308 aa). The carbamoyl phosphate site is built by Arg-1975 and Thr-1976. Lys-2003 is an L-aspartate binding site. Carbamoyl phosphate-binding residues include Arg-2024, His-2052, and Gln-2055. L-aspartate-binding residues include Arg-2085 and Arg-2146. Carbamoyl phosphate-binding residues include Met-2185 and Pro-2186.

The protein in the N-terminal section; belongs to the CarA family. This sequence in the 2nd section; belongs to the CarB family. In the 3rd section; belongs to the metallo-dependent hydrolases superfamily. DHOase family. CAD subfamily. It in the C-terminal section; belongs to the aspartate/ornithine carbamoyltransferase superfamily. ATCase family. Homohexamer. Interacts with CIPC. The cofactor is Zn(2+). Requires Mg(2+) as cofactor. It depends on Mn(2+) as a cofactor. Post-translationally, activated by MAP kinase (Erk1/2) phosphorylation just prior to the S phase of the cell cycle, when the demand for pyrimidine nucleotides is greatest, and down-regulated as the cells emerge from S phase by protein kinase A (PKA) phosphorylation. Phosphorylation at Ser-1859 by RPS6KB1 downstream of MTOR promotes oligomerization and stimulates dihydroorotase activity. Phosphorylation at Ser-1406 reduces sensitivity to feedback inhibition by UTP.

The protein localises to the cytoplasm. The protein resides in the nucleus. It catalyses the reaction hydrogencarbonate + L-glutamine + 2 ATP + H2O = carbamoyl phosphate + L-glutamate + 2 ADP + phosphate + 2 H(+). The catalysed reaction is L-glutamine + H2O = L-glutamate + NH4(+). It carries out the reaction hydrogencarbonate + NH4(+) + 2 ATP = carbamoyl phosphate + 2 ADP + phosphate + 2 H(+). The enzyme catalyses carbamoyl phosphate + L-aspartate = N-carbamoyl-L-aspartate + phosphate + H(+). It catalyses the reaction (S)-dihydroorotate + H2O = N-carbamoyl-L-aspartate + H(+). It participates in pyrimidine metabolism; UMP biosynthesis via de novo pathway; (S)-dihydroorotate from bicarbonate: step 1/3. Its pathway is pyrimidine metabolism; UMP biosynthesis via de novo pathway; (S)-dihydroorotate from bicarbonate: step 2/3. The protein operates within pyrimidine metabolism; UMP biosynthesis via de novo pathway; (S)-dihydroorotate from bicarbonate: step 3/3. Its activity is regulated as follows. Allosterically regulated and controlled by phosphorylation. 5-phosphoribose 1-diphosphate (PRPP) is an activator while UMP and UTP are inhibitors of the CPSase reaction. Its function is as follows. Multifunctional protein that encodes the first 3 enzymatic activities of the de novo pyrimidine pathway: carbamoylphosphate synthetase (CPSase; EC 6.3.5.5), aspartate transcarbamylase (ATCase; EC 2.1.3.2) and dihydroorotase (DHOase; EC 3.5.2.3). The CPSase-function is accomplished in 2 steps, by a glutamine-dependent amidotransferase activity (GATase) that binds and cleaves glutamine to produce ammonia, followed by an ammonium-dependent carbamoyl phosphate synthetase, which reacts with the ammonia, hydrogencarbonate and ATP to form carbamoyl phosphate. The endogenously produced carbamoyl phosphate is sequestered and channeled to the ATCase active site. ATCase then catalyzes the formation of carbamoyl-L-aspartate from L-aspartate and carbamoyl phosphate. In the last step, DHOase catalyzes the cyclization of carbamoyl aspartate to dihydroorotate. The polypeptide is Multifunctional protein CAD (Homo sapiens (Human)).